The primary structure comprises 156 residues: Inner membrane protein YlaC (156 aa).

Over 1-35 (MTEIQRLLTETIESLNTREKRDNKPRFSISFIRKH) the chain is Cytoplasmic. A helical membrane pass occupies residues 36 to 56 (PGLFIGMYVAFFATLAVMLQS). Residues 57-58 (ET) are Periplasmic-facing. A helical transmembrane segment spans residues 59–79 (LSGSVWLLVVLFILLNGFFFF). The Cytoplasmic segment spans residues 80–156 (DVYPRYRYED…FTLARAESTS (77 aa)).

It localises to the cell inner membrane. This is Inner membrane protein YlaC (ylaC) from Escherichia coli (strain K12).